We begin with the raw amino-acid sequence, 262 residues long: Hydroxyethylthiazole kinase (262 aa).

Met39 is a binding site for substrate. The ATP site is built by Lys115 and Thr160. A substrate-binding site is contributed by Gly187.

The protein belongs to the Thz kinase family. Mg(2+) serves as cofactor.

It catalyses the reaction 5-(2-hydroxyethyl)-4-methylthiazole + ATP = 4-methyl-5-(2-phosphooxyethyl)-thiazole + ADP + H(+). The protein operates within cofactor biosynthesis; thiamine diphosphate biosynthesis; 4-methyl-5-(2-phosphoethyl)-thiazole from 5-(2-hydroxyethyl)-4-methylthiazole: step 1/1. Its function is as follows. Catalyzes the phosphorylation of the hydroxyl group of 4-methyl-5-beta-hydroxyethylthiazole (THZ). This chain is Hydroxyethylthiazole kinase, found in Staphylococcus epidermidis (strain ATCC 35984 / DSM 28319 / BCRC 17069 / CCUG 31568 / BM 3577 / RP62A).